We begin with the raw amino-acid sequence, 439 residues long: U1 small nuclear ribonucleoprotein 70 kDa (439 aa).

An N-acetylthreonine modification is found at Thr-2. The disordered stretch occupies residues 48–79 (FEDPRDAPPPTRAETREERMERKRREKIERRQ). A compositionally biased stretch (basic and acidic residues) spans 60–79 (AETREERMERKRREKIERRQ). The tract at residues 92–202 (HNDPNAQGDA…GGGLGGTRRG (111 aa)) is required for interaction with U1 RNA. An RRM domain is found at 103–181 (KTLFVARVNY…RRVLVDVERG (79 aa)). Lys-118 is modified (N6-acetyllysine). Tyr-126 carries the post-translational modification Phosphotyrosine. The disordered stretch occupies residues 187–439 (WRPRRLGGGL…NGYLMEAAPE (253 aa)). Gly residues predominate over residues 192–201 (LGGGLGGTRR). Basic and acidic residues predominate over residues 207–254 (NIRHSGRDDTSRYDERPGPSPLPHRDRDRDRERERRERSRERDKERER). Residues Ser-226 and Ser-268 each carry the phosphoserine modification. Positions 255-268 (RRSRSRDRRRRSRS) are enriched in basic residues. Composition is skewed to basic and acidic residues over residues 269–286 (RDKEERRRSRERSKDKDR) and 294–310 (RSRERARRERERKEELR). Ser-323 bears the Phosphoserine mark. The span at 346–394 (PEEKGRDRDRDRRRSHRSERERRRDRDRDRDREHKRGERGGDRGRDEAR) shows a compositional bias: basic and acidic residues. Lys-349 is covalently cross-linked (Glycyl lysine isopeptide (Lys-Gly) (interchain with G-Cter in SUMO2)). Over residues 395 to 410 (GGGGGGQDNGLEGLGN) the composition is skewed to gly residues.

Component of the U1 snRNP. The U1 snRNP is composed of the U1 snRNA and the 7 core Sm proteins SNRPB, SNRPD1, SNRPD2, SNRPD3, SNRPE, SNRPF and SNRPG that assemble in a heptameric protein ring on the Sm site of the small nuclear RNA to form the core snRNP, and at least three U1 snRNP-specific proteins SNRNP70/U1-70K, SNRPA/U1-A and SNRPC/U1-C. Interacts with SCNM1. Found in a pre-mRNA splicing complex with SFRS4, SFRS5, SNRNP70, SNRPA1, SRRM1 and SRRM2. Found in a pre-mRNA exonic splicing enhancer (ESE) complex with SNRNP70, SNRPA1, SRRM1 and TRA2B/SFRS10. Interacts with dephosphorylated SFRS13A and SFPQ. Interacts with NUDT21/CPSF5, CPSF6, SCAF11, and ZRANB2. Interacts with GEMIN5. Interacts with FUS. In terms of processing, extensively phosphorylated on serine residues in the C-terminal region.

It localises to the nucleus speckle. It is found in the nucleus. The protein resides in the nucleoplasm. Component of the spliceosomal U1 snRNP, which is essential for recognition of the pre-mRNA 5' splice-site and the subsequent assembly of the spliceosome. SNRNP70 binds to the loop I region of U1-snRNA. The chain is U1 small nuclear ribonucleoprotein 70 kDa (SNRNP70) from Bos taurus (Bovine).